A 195-amino-acid chain; its full sequence is Nucleoid occlusion factor SlmA (195 aa).

Residues 6–66 (PSRRESILQA…ALIEFAEEAV (61 aa)) enclose the HTH tetR-type domain. The segment at residues 29 to 48 (TTAGLAKTVGVTEAALYRHF) is a DNA-binding region (H-T-H motif). The stretch at 118–138 (RKRASQFFERLETQIRQALKE) forms a coiled coil.

Belongs to the nucleoid occlusion factor SlmA family. Homodimer. Interacts with FtsZ.

Its subcellular location is the cytoplasm. The protein localises to the nucleoid. In terms of biological role, required for nucleoid occlusion (NO) phenomenon, which prevents Z-ring formation and cell division over the nucleoid. Acts as a DNA-associated cell division inhibitor that binds simultaneously chromosomal DNA and FtsZ, and disrupts the assembly of FtsZ polymers. SlmA-DNA-binding sequences (SBS) are dispersed on non-Ter regions of the chromosome, preventing FtsZ polymerization at these regions. The sequence is that of Nucleoid occlusion factor SlmA from Marinobacter nauticus (strain ATCC 700491 / DSM 11845 / VT8) (Marinobacter aquaeolei).